The chain runs to 264 residues: Acetyl-coenzyme A carboxylase carboxyl transferase subunit beta (264 aa).

In terms of domain architecture, CoA carboxyltransferase N-terminal spans 4–264; it reads LWVKCKQCQQ…CGNSLEGVES (261 aa). Cys-8, Cys-11, Cys-27, and Cys-29 together coordinate Zn(2+). The segment at 8–29 adopts a C4-type zinc-finger fold; sequence CKQCQQILLTKELEKNLKVCRC.

This sequence belongs to the AccD/PCCB family. As to quaternary structure, acetyl-CoA carboxylase is a heterohexamer composed of biotin carboxyl carrier protein (AccB), biotin carboxylase (AccC) and two subunits each of ACCase subunit alpha (AccA) and ACCase subunit beta (AccD). It depends on Zn(2+) as a cofactor.

The protein resides in the cytoplasm. It catalyses the reaction N(6)-carboxybiotinyl-L-lysyl-[protein] + acetyl-CoA = N(6)-biotinyl-L-lysyl-[protein] + malonyl-CoA. It participates in lipid metabolism; malonyl-CoA biosynthesis; malonyl-CoA from acetyl-CoA: step 1/1. Its function is as follows. Component of the acetyl coenzyme A carboxylase (ACC) complex. Biotin carboxylase (BC) catalyzes the carboxylation of biotin on its carrier protein (BCCP) and then the CO(2) group is transferred by the transcarboxylase to acetyl-CoA to form malonyl-CoA. This Heliobacterium modesticaldum (strain ATCC 51547 / Ice1) protein is Acetyl-coenzyme A carboxylase carboxyl transferase subunit beta.